The following is a 42-amino-acid chain: Iota-conotoxin-like R11.16 (42 aa).

4 cysteine pairs are disulfide-bonded: Cys-5/Cys-19, Cys-12/Cys-22, Cys-18/Cys-27, and Cys-21/Cys-36.

This sequence belongs to the conotoxin I1 superfamily. Expressed by the venom duct.

It is found in the secreted. Iota-conotoxins bind to voltage-gated sodium channels (Nav) and act as agonists by shifting the voltage-dependence of activation to more hyperpolarized levels. Produces general excitatory symptoms. The polypeptide is Iota-conotoxin-like R11.16 (Conus radiatus (Rayed cone)).